Reading from the N-terminus, the 270-residue chain is Urease accessory protein UreD (270 aa).

The protein belongs to the UreD family. In terms of assembly, ureD, UreF and UreG form a complex that acts as a GTP-hydrolysis-dependent molecular chaperone, activating the urease apoprotein by helping to assemble the nickel containing metallocenter of UreC. The UreE protein probably delivers the nickel.

It localises to the cytoplasm. Its function is as follows. Required for maturation of urease via the functional incorporation of the urease nickel metallocenter. This is Urease accessory protein UreD from Beijerinckia indica subsp. indica (strain ATCC 9039 / DSM 1715 / NCIMB 8712).